Here is a 580-residue protein sequence, read N- to C-terminus: MIKPTFLRRVAIAALLSGSCFSAAAAPPAPPVSYGVEEDVFHPVRAKQGMVASVDATATQVGVDILKEGGNAVDAAVAVGYALAVTHPQAGNLGGGGFMLIRSKNGNTTAIDFREMAPAKATRDMFLDDQGNPDSKKSLTSHLASGTPGTVAGFSLALDKYGTMPLNKVVQPAFKLARDGFIVNDALADDLKTYGSEVLPNHENSKAIFWKEGEPLKKGDTLVQANLAKSLEMIAENGPDEFYKGTIAEQIAQEMQKNGGLITKEDLAAYKAVERTPISGDYRGYQVYSMPPPSSGGIHIVQILNILENFDMKKYGFGSADAMQIMAEAEKYAYADRSEYLGDPDFVKVPWQALTNKAYAKSIADQIDINKAKPSSEIRPGKLAPYESNQTTHYSVVDKDGNAVAVTYTLNTTFGTGIVAGESGILLNNQMDDFSAKPGVPNVYGLVGGDANAVGPNKRPLSSMSPTIVVKDGKTWLVTGSPGGSRIITTVLQMVVNSIDYGLNVAEATNAPRFHHQWLPDELRVEKGFSPDTLKLLEAKGQKVALKEAMGSTQSIMVGPDGELYGASDPRSVDDLTAGY.

The signal sequence occupies residues 1–25; that stretch reads MIKPTFLRRVAIAALLSGSCFSAAA. R114 contributes to the L-glutamate binding site. T391 acts as the Nucleophile in catalysis. L-glutamate contacts are provided by residues T409, N411, Q430, D433, 462–463, and 483–484; these read SS and GG. The tract at residues 561-580 is disordered; that stretch reads DGELYGASDPRSVDDLTAGY.

It belongs to the gamma-glutamyltransferase family. As to quaternary structure, this enzyme consists of two polypeptide chains, which are synthesized in precursor form from a single polypeptide. Cleaved by autocatalysis into a large and a small subunit.

Its subcellular location is the periplasm. It catalyses the reaction an N-terminal (5-L-glutamyl)-[peptide] + an alpha-amino acid = 5-L-glutamyl amino acid + an N-terminal L-alpha-aminoacyl-[peptide]. It carries out the reaction glutathione + H2O = L-cysteinylglycine + L-glutamate. The enzyme catalyses an S-substituted glutathione + H2O = an S-substituted L-cysteinylglycine + L-glutamate. It functions in the pathway sulfur metabolism; glutathione metabolism. Transferase and hydrolase activities are inhibited by L-Ala and L-Gln, and also by GGT affinity labeling reagents such as azaserine and 6-diazo-5-oxo-nor-leucine. Its function is as follows. Cleaves the gamma-glutamyl bond of periplasmic glutathione (gamma-Glu-Cys-Gly), glutathione conjugates, and other gamma-glutamyl compounds. The metabolism of glutathione releases free glutamate and the dipeptide cysteinyl-glycine, which is hydrolyzed to cysteine and glycine by dipeptidases; it may function in amino acid uptake/salvage, or possibly in peptidoglycan linkage. Catalyzes the hydrolysis and transpeptidation of many gamma-glutamyl compounds (including some D-gamma-glutamyl substrates), with a preference for basic and aromatic amino acids as acceptors. The KM values for gamma-glutamyl acceptors are so high that it has been proposed transpeptidation is not the physiological role in E.coli. The sequence is that of Glutathione hydrolase proenzyme (ggt) from Escherichia coli (strain K12).